The primary structure comprises 206 residues: Alpha-S1-casein (206 aa).

An N-terminal signal peptide occupies residues 1–15 (MKLLIFICLAAVALA). Phosphoserine occurs at positions 33, 77, 78, 79, 80, 81, 82, and 89. The interval 67-106 (HGMEGHEQRGSSSSSSEEVVGNSAEQKHVQKEEDVPSQSY) is disordered. Basic and acidic residues predominate over residues 91-100 (EQKHVQKEED).

The protein belongs to the alpha-casein family. As to expression, mammary gland specific. Secreted in milk.

It is found in the secreted. Its function is as follows. Important role in the capacity of milk to transport calcium phosphate. The protein is Alpha-S1-casein (CSN1S1) of Sus scrofa (Pig).